A 439-amino-acid chain; its full sequence is Glutamyl-tRNA(Gln) amidotransferase subunit D (439 aa).

The Asparaginase/glutaminase domain maps to 88-419 (GKVKIISTGG…EEVKRIMLTN (332 aa)). Residues threonine 98, threonine 174, aspartate 175, and lysine 253 contribute to the active site.

The protein belongs to the asparaginase 1 family. GatD subfamily. In terms of assembly, heterodimer of GatD and GatE.

It carries out the reaction L-glutamyl-tRNA(Gln) + L-glutamine + ATP + H2O = L-glutaminyl-tRNA(Gln) + L-glutamate + ADP + phosphate + H(+). Its function is as follows. Allows the formation of correctly charged Gln-tRNA(Gln) through the transamidation of misacylated Glu-tRNA(Gln) in organisms which lack glutaminyl-tRNA synthetase. The reaction takes place in the presence of glutamine and ATP through an activated gamma-phospho-Glu-tRNA(Gln). The GatDE system is specific for glutamate and does not act on aspartate. The protein is Glutamyl-tRNA(Gln) amidotransferase subunit D of Metallosphaera sedula (strain ATCC 51363 / DSM 5348 / JCM 9185 / NBRC 15509 / TH2).